The chain runs to 110 residues: NADH dehydrogenase [ubiquinone] iron-sulfur protein 6, mitochondrial (110 aa).

The transit peptide at 1–22 directs the protein to the mitochondrion; the sequence is MASNLLKALIRSQILPSSRRNF.

The protein belongs to the complex I NDUFS6 subunit family. In terms of assembly, complex I is composed of at least 49 different subunits. This is a component of the iron-sulfur (IP) fragment of the enzyme.

It localises to the mitochondrion inner membrane. Accessory subunit of the mitochondrial membrane respiratory chain NADH dehydrogenase (Complex I), that is believed not to be involved in catalysis. Complex I functions in the transfer of electrons from NADH to the respiratory chain. The immediate electron acceptor for the enzyme is believed to be ubiquinone. The chain is NADH dehydrogenase [ubiquinone] iron-sulfur protein 6, mitochondrial from Arabidopsis thaliana (Mouse-ear cress).